The following is a 288-amino-acid chain: Polyamine aminopropyltransferase (288 aa).

Positions 9–238 constitute a PABS domain; it reads ETLHDQFGQY…GIMTFAWATD (230 aa). Q33 provides a ligand contact to S-methyl-5'-thioadenosine. Residues H64 and D88 each coordinate spermidine. S-methyl-5'-thioadenosine contacts are provided by residues E108 and 140 to 141; that span reads DG. D158 (proton acceptor) is an active-site residue. 158–161 is a binding site for spermidine; that stretch reads DCTD. P165 is a binding site for S-methyl-5'-thioadenosine.

This sequence belongs to the spermidine/spermine synthase family. In terms of assembly, homodimer or homotetramer.

The protein resides in the cytoplasm. It catalyses the reaction S-adenosyl 3-(methylsulfanyl)propylamine + putrescine = S-methyl-5'-thioadenosine + spermidine + H(+). Its pathway is amine and polyamine biosynthesis; spermidine biosynthesis; spermidine from putrescine: step 1/1. Functionally, catalyzes the irreversible transfer of a propylamine group from the amino donor S-adenosylmethioninamine (decarboxy-AdoMet) to putrescine (1,4-diaminobutane) to yield spermidine. This is Polyamine aminopropyltransferase from Shigella boydii serotype 4 (strain Sb227).